We begin with the raw amino-acid sequence, 223 residues long: Ribonuclease HII (223 aa).

One can recognise an RNase H type-2 domain in the interval 32 to 223 (FHIAGVDEVG…LKGRFRDNMS (192 aa)). A divalent metal cation-binding residues include aspartate 38, glutamate 39, and aspartate 130.

The protein belongs to the RNase HII family. Mn(2+) is required as a cofactor. The cofactor is Mg(2+).

It is found in the cytoplasm. The enzyme catalyses Endonucleolytic cleavage to 5'-phosphomonoester.. In terms of biological role, endonuclease that specifically degrades the RNA of RNA-DNA hybrids. The polypeptide is Ribonuclease HII (Bartonella quintana (strain Toulouse) (Rochalimaea quintana)).